Here is a 545-residue protein sequence, read N- to C-terminus: Membrane protein insertase YidC (545 aa).

The chain crosses the membrane as a helical span at residues 6 to 26 (NLLLIALLFVSFMIWQAWQTD). A disordered region spans residues 31-54 (PVAQTTQQTSNPATGDAASSAVPA). The next 4 helical transmembrane spans lie at 342 to 362 (KFIH…TFIV), 417 to 437 (LGGC…YYML), 455 to 475 (LSAQ…MFFI), and 496 to 516 (PVIF…YYIV).

The protein belongs to the OXA1/ALB3/YidC family. Type 1 subfamily. Interacts with the Sec translocase complex via SecD. Specifically interacts with transmembrane segments of nascent integral membrane proteins during membrane integration.

The protein localises to the cell inner membrane. In terms of biological role, required for the insertion and/or proper folding and/or complex formation of integral membrane proteins into the membrane. Involved in integration of membrane proteins that insert both dependently and independently of the Sec translocase complex, as well as at least some lipoproteins. Aids folding of multispanning membrane proteins. This is Membrane protein insertase YidC from Serratia proteamaculans (strain 568).